Reading from the N-terminus, the 38-residue chain is Esterase-5 (38 aa).

The interval 1–38 (SAAADPLIVELPNGKVRGRDNEGYYEAEGIPRAEPPVG) is disordered.

The protein belongs to the type-B carboxylesterase/lipase family.

It catalyses the reaction a carboxylic ester + H2O = an alcohol + a carboxylate + H(+). In Drosophila mojavensis (Fruit fly), this protein is Esterase-5 (Est-5).